The primary structure comprises 704 residues: Elongation factor G (704 aa).

Residues 8-290 (ARYRNIGISA…AVVDYLPSPV (283 aa)) form the tr-type G domain. GTP-binding positions include 17 to 24 (AHIDAGKT), 88 to 92 (DTPGH), and 142 to 145 (NKMD).

Belongs to the TRAFAC class translation factor GTPase superfamily. Classic translation factor GTPase family. EF-G/EF-2 subfamily.

Its subcellular location is the cytoplasm. Its function is as follows. Catalyzes the GTP-dependent ribosomal translocation step during translation elongation. During this step, the ribosome changes from the pre-translocational (PRE) to the post-translocational (POST) state as the newly formed A-site-bound peptidyl-tRNA and P-site-bound deacylated tRNA move to the P and E sites, respectively. Catalyzes the coordinated movement of the two tRNA molecules, the mRNA and conformational changes in the ribosome. The polypeptide is Elongation factor G (Pectobacterium carotovorum subsp. carotovorum (strain PC1)).